The following is a 414-amino-acid chain: Putative competence-damage inducible protein (414 aa).

This sequence belongs to the CinA family.

This is Putative competence-damage inducible protein from Listeria monocytogenes serotype 4b (strain CLIP80459).